The primary structure comprises 3589 residues: D-lysergyl-peptide-synthetase subunit 1 (3589 aa).

The tract at residues 344-742 (NCHSRPDSLA…IGRKDLQVKV (399 aa)) is adenylation (A) domain 1. A Carrier 1 domain is found at 883-952 (VERRLQLLFA…KLRDLAAASS (70 aa)). Serine 915 carries the post-translational modification O-(pantetheine 4'-phosphoryl)serine. A condensation (C) domain 1 region spans residues 995-1380 (EDIYPCTSLQ…SQFQHILTQI (386 aa)). The segment at 1424 to 1826 (QAKAQMQPEA…RRKDSQVKLR (403 aa)) is adenylation (A) domain 2. In terms of domain architecture, Carrier 2 spans 1974–2042 (LERELQKIWA…TIEKLAAAAV (69 aa)). Serine 2006 bears the O-(pantetheine 4'-phosphoryl)serine mark. The condensation (C) domain 2 stretch occupies residues 2087–2509 (VEDIYPCSPI…IEMLDEEHRS (423 aa)). Positions 2534-2929 (CLESPESPAI…GRKDDQVKIR (396 aa)) are adenylation (A) domain 3. The Carrier 3 domain maps to 3064–3132 (LETRLQELVG…RLSELAVVLN (69 aa)). An O-(pantetheine 4'-phosphoryl)serine modification is found at serine 3096. A cyclization (Cyc) domain region spans residues 3187 to 3585 (TNFIALHFSQ…TYPESLVSEL (399 aa)).

It belongs to the NRP synthetase family.

It participates in alkaloid biosynthesis; ergot alkaloid biosynthesis. Functionally, D-lysergyl-peptide-synthetase subunit 1; part of the gene cluster that mediates the biosynthesis of fungal ergot alkaloid ergovaline, the predominant ergopeptine product in E.festucae var. lolii. DmaW catalyzes the first step of ergot alkaloid biosynthesis by condensing dimethylallyl diphosphate (DMAP) and tryptophan to form 4-dimethylallyl-L-tryptophan. The second step is catalyzed by the methyltransferase easF that methylates 4-dimethylallyl-L-tryptophan in the presence of S-adenosyl-L-methionine, resulting in the formation of 4-dimethylallyl-L-abrine. The catalase easC and the FAD-dependent oxidoreductase easE then transform 4-dimethylallyl-L-abrine to chanoclavine-I which is further oxidized by easD in the presence of NAD(+), resulting in the formation of chanoclavine-I aldehyde. Agroclavine dehydrogenase easG then mediates the conversion of chanoclavine-I aldehyde to agroclavine via a non-enzymatic adduct reaction: the substrate is an iminium intermediate that is formed spontaneously from chanoclavine-I aldehyde in the presence of glutathione. The presence of easA is not required to complete this reaction. Further conversion of agroclavine to paspalic acid is a two-step process involving oxidation of agroclavine to elymoclavine and of elymoclavine to paspalic acid, the second step being performed by the elymoclavine oxidase cloA. Paspalic acid is then further converted to D-lysergic acid. Ergovaline is assembled from D-lysergic acid and three different amino acids by the D-lysergyl-peptide-synthetase composed of a monomudular (lpsB) and a trimodular (lpsA) nonribosomal peptide synthetase subunit. This chain is D-lysergyl-peptide-synthetase subunit 1, found in Epichloe festucae var. lolii (Neotyphodium lolii).